The sequence spans 179 residues: Acireductone dioxygenase (179 aa).

Fe(2+) contacts are provided by H99, H101, E105, and H144. Ni(2+) contacts are provided by H99, H101, E105, and H144.

This sequence belongs to the acireductone dioxygenase (ARD) family. In terms of assembly, monomer. Fe(2+) serves as cofactor. It depends on Ni(2+) as a cofactor.

It catalyses the reaction 1,2-dihydroxy-5-(methylsulfanyl)pent-1-en-3-one + O2 = 3-(methylsulfanyl)propanoate + CO + formate + 2 H(+). The enzyme catalyses 1,2-dihydroxy-5-(methylsulfanyl)pent-1-en-3-one + O2 = 4-methylsulfanyl-2-oxobutanoate + formate + 2 H(+). It participates in amino-acid biosynthesis; L-methionine biosynthesis via salvage pathway; L-methionine from S-methyl-5-thio-alpha-D-ribose 1-phosphate: step 5/6. Catalyzes 2 different reactions between oxygen and the acireductone 1,2-dihydroxy-3-keto-5-methylthiopentene (DHK-MTPene) depending upon the metal bound in the active site. Fe-containing acireductone dioxygenase (Fe-ARD) produces formate and 2-keto-4-methylthiobutyrate (KMTB), the alpha-ketoacid precursor of methionine in the methionine recycle pathway. Ni-containing acireductone dioxygenase (Ni-ARD) produces methylthiopropionate, carbon monoxide and formate, and does not lie on the methionine recycle pathway. This Exiguobacterium sibiricum (strain DSM 17290 / CCUG 55495 / CIP 109462 / JCM 13490 / 255-15) protein is Acireductone dioxygenase.